The following is a 670-amino-acid chain: DNA ligase (670 aa).

NAD(+) is bound by residues 34–38 (DAEYD), 83–84 (SL), and Glu-112. Catalysis depends on Lys-114, which acts as the N6-AMP-lysine intermediate. The NAD(+) site is built by Arg-135, Glu-169, Lys-285, and Lys-309. The Zn(2+) site is built by Cys-403, Cys-406, Cys-421, and Cys-426. The 82-residue stretch at 589–670 (PASSVLAGKT…FLQEISREEQ (82 aa)) folds into the BRCT domain.

Belongs to the NAD-dependent DNA ligase family. LigA subfamily. It depends on Mg(2+) as a cofactor. Requires Mn(2+) as cofactor.

The enzyme catalyses NAD(+) + (deoxyribonucleotide)n-3'-hydroxyl + 5'-phospho-(deoxyribonucleotide)m = (deoxyribonucleotide)n+m + AMP + beta-nicotinamide D-nucleotide.. Its function is as follows. DNA ligase that catalyzes the formation of phosphodiester linkages between 5'-phosphoryl and 3'-hydroxyl groups in double-stranded DNA using NAD as a coenzyme and as the energy source for the reaction. It is essential for DNA replication and repair of damaged DNA. This is DNA ligase from Geobacillus thermodenitrificans (strain NG80-2).